The primary structure comprises 129 residues: Small ribosomal subunit protein uS11 (129 aa).

The protein belongs to the universal ribosomal protein uS11 family. In terms of assembly, part of the 30S ribosomal subunit. Interacts with proteins S7 and S18. Binds to IF-3.

Its function is as follows. Located on the platform of the 30S subunit, it bridges several disparate RNA helices of the 16S rRNA. Forms part of the Shine-Dalgarno cleft in the 70S ribosome. The polypeptide is Small ribosomal subunit protein uS11 (Cereibacter sphaeroides (strain ATCC 17025 / ATH 2.4.3) (Rhodobacter sphaeroides)).